Here is a 183-residue protein sequence, read N- to C-terminus: Translocon-associated protein subunit beta (183 aa).

Positions 1–17 (MRLLASVLLALFAVSHA) are cleaved as a signal peptide. At 18 to 149 (EEGARLLASK…DRRFSPHFLD (132 aa)) the chain is on the lumenal side. N-linked (GlcNAc...) asparagine glycans are attached at residues Asn-88 and Asn-104. Residues 150-169 (WAAFGVMTLPSIGIPLLLWY) form a helical membrane-spanning segment. The Cytoplasmic portion of the chain corresponds to 170 to 183 (SSKRKYDTPKSKKN).

It belongs to the TRAP-beta family. In terms of assembly, heterotetramer of TRAP-alpha, TRAP-beta, TRAP-delta and TRAP-gamma. Interacts with STING1.

The protein localises to the endoplasmic reticulum membrane. In terms of biological role, TRAP proteins are part of a complex whose function is to bind calcium to the ER membrane and thereby regulate the retention of ER resident proteins. This Canis lupus familiaris (Dog) protein is Translocon-associated protein subunit beta (SSR2).